A 182-amino-acid polypeptide reads, in one-letter code: Putative manganese efflux pump MntP (182 aa).

Transmembrane regions (helical) follow at residues 7 to 27, 38 to 58, 71 to 91, 106 to 126, 131 to 151, and 159 to 179; these read IISI…VSLG, IAYI…AGML, TSFA…FSAF, LWII…GLGI, IFVT…LGML, and FLGV…GIFI.

Belongs to the MntP (TC 9.B.29) family.

It localises to the cell membrane. Probably functions as a manganese efflux pump. The sequence is that of Putative manganese efflux pump MntP from Oceanobacillus iheyensis (strain DSM 14371 / CIP 107618 / JCM 11309 / KCTC 3954 / HTE831).